Reading from the N-terminus, the 397-residue chain is Elongation factor Tu (397 aa).

The tr-type G domain occupies lysine 10–glutamate 206. The segment at glycine 19–threonine 26 is G1. Glycine 19–threonine 26 contacts GTP. Threonine 26 lines the Mg(2+) pocket. The interval glycine 62–serine 66 is G2. Positions aspartate 83 to glycine 86 are G3. GTP-binding positions include aspartate 83–histidine 87 and asparagine 138–aspartate 141. The G4 stretch occupies residues asparagine 138 to aspartate 141. The G5 stretch occupies residues serine 176 to phenylalanine 178.

It belongs to the TRAFAC class translation factor GTPase superfamily. Classic translation factor GTPase family. EF-Tu/EF-1A subfamily. In terms of assembly, monomer.

The protein localises to the cytoplasm. It carries out the reaction GTP + H2O = GDP + phosphate + H(+). GTP hydrolase that promotes the GTP-dependent binding of aminoacyl-tRNA to the A-site of ribosomes during protein biosynthesis. In Cutibacterium acnes (strain DSM 16379 / KPA171202) (Propionibacterium acnes), this protein is Elongation factor Tu.